The sequence spans 343 residues: D-alanine--D-alanine ligase (343 aa).

Positions 132 to 337 (KNLFSYHKIP…YPDLIDKLIE (206 aa)) constitute an ATP-grasp domain. 165–220 (DRFLGWPCFVKPANMGSSIGVSKVHSPGEVKKALEKGFYYDRKLIFEEFVEGREIE) is an ATP binding site. Aspartate 291, glutamate 304, and asparagine 306 together coordinate Mg(2+).

The protein belongs to the D-alanine--D-alanine ligase family. Mg(2+) is required as a cofactor. Requires Mn(2+) as cofactor.

It is found in the cytoplasm. It carries out the reaction 2 D-alanine + ATP = D-alanyl-D-alanine + ADP + phosphate + H(+). It participates in cell wall biogenesis; peptidoglycan biosynthesis. In terms of biological role, cell wall formation. The sequence is that of D-alanine--D-alanine ligase from Halothermothrix orenii (strain H 168 / OCM 544 / DSM 9562).